A 312-amino-acid chain; its full sequence is Dihydroorotate dehydrogenase B (NAD(+)), catalytic subunit (312 aa).

Residues Ser23 and 47–48 each bind FMN; that span reads KA. Substrate is bound by residues Lys47 and 71-75; that span reads NAIGL. FMN contacts are provided by Asn102 and Asn130. Asn130 contributes to the substrate binding site. Cys133 functions as the Nucleophile in the catalytic mechanism. Residues Lys168 and Ile194 each contribute to the FMN site. 195-196 lines the substrate pocket; that stretch reads NT. FMN is bound by residues Gly220, 246–247, and 268–269; these read GG and GT.

It belongs to the dihydroorotate dehydrogenase family. Type 1 subfamily. As to quaternary structure, heterotetramer of 2 PyrK and 2 PyrD type B subunits. FMN is required as a cofactor.

Its subcellular location is the cytoplasm. It carries out the reaction (S)-dihydroorotate + NAD(+) = orotate + NADH + H(+). The protein operates within pyrimidine metabolism; UMP biosynthesis via de novo pathway; orotate from (S)-dihydroorotate (NAD(+) route): step 1/1. Functionally, catalyzes the conversion of dihydroorotate to orotate with NAD(+) as electron acceptor. This chain is Dihydroorotate dehydrogenase B (NAD(+)), catalytic subunit (pyrDB), found in Enterococcus faecalis (strain ATCC 700802 / V583).